An 88-amino-acid chain; its full sequence is DNA-directed RNA polymerase subunit omega (88 aa).

It belongs to the RNA polymerase subunit omega family. As to quaternary structure, the RNAP catalytic core consists of 2 alpha, 1 beta, 1 beta' and 1 omega subunit. When a sigma factor is associated with the core the holoenzyme is formed, which can initiate transcription.

The catalysed reaction is RNA(n) + a ribonucleoside 5'-triphosphate = RNA(n+1) + diphosphate. Promotes RNA polymerase assembly. Latches the N- and C-terminal regions of the beta' subunit thereby facilitating its interaction with the beta and alpha subunits. The chain is DNA-directed RNA polymerase subunit omega from Clostridioides difficile (strain 630) (Peptoclostridium difficile).